Consider the following 208-residue polypeptide: PITH domain-containing protein ZK353.9 (208 aa).

Residues 17–189 (EVPGDDVYRY…RIAIATYESR (173 aa)) form the PITH domain.

This sequence belongs to the PITHD1 family.

The protein is PITH domain-containing protein ZK353.9 of Caenorhabditis elegans.